We begin with the raw amino-acid sequence, 221 residues long: Lipoprotein-releasing system ATP-binding protein LolD (221 aa).

Residues 8–220 (LKMISKHYKQ…YNLKHGLLNI (213 aa)) form the ABC transporter domain. 42–49 (GSSGSGKS) is an ATP binding site.

Belongs to the ABC transporter superfamily. Lipoprotein translocase (TC 3.A.1.125) family. In terms of assembly, the complex is composed of two ATP-binding proteins (LolD) and two transmembrane proteins (LolC and LolE).

It is found in the cell inner membrane. Its function is as follows. Part of the ABC transporter complex LolCDE involved in the translocation of mature outer membrane-directed lipoproteins, from the inner membrane to the periplasmic chaperone, LolA. Responsible for the formation of the LolA-lipoprotein complex in an ATP-dependent manner. This Rickettsia prowazekii (strain Madrid E) protein is Lipoprotein-releasing system ATP-binding protein LolD.